A 932-amino-acid polypeptide reads, in one-letter code: Glycine dehydrogenase (decarboxylating) (932 aa).

Lys685 carries the post-translational modification N6-(pyridoxal phosphate)lysine.

The protein belongs to the GcvP family. The glycine cleavage system is composed of four proteins: P, T, L and H. Requires pyridoxal 5'-phosphate as cofactor.

It catalyses the reaction N(6)-[(R)-lipoyl]-L-lysyl-[glycine-cleavage complex H protein] + glycine + H(+) = N(6)-[(R)-S(8)-aminomethyldihydrolipoyl]-L-lysyl-[glycine-cleavage complex H protein] + CO2. Functionally, the glycine cleavage system catalyzes the degradation of glycine. The P protein binds the alpha-amino group of glycine through its pyridoxal phosphate cofactor; CO(2) is released and the remaining methylamine moiety is then transferred to the lipoamide cofactor of the H protein. This chain is Glycine dehydrogenase (decarboxylating), found in Brucella canis (strain ATCC 23365 / NCTC 10854 / RM-666).